Reading from the N-terminus, the 131-residue chain is Small ribosomal subunit protein uS8 (131 aa).

It belongs to the universal ribosomal protein uS8 family. Part of the 30S ribosomal subunit. Contacts proteins S5 and S12.

Its function is as follows. One of the primary rRNA binding proteins, it binds directly to 16S rRNA central domain where it helps coordinate assembly of the platform of the 30S subunit. This chain is Small ribosomal subunit protein uS8, found in Blochmanniella pennsylvanica (strain BPEN).